The sequence spans 580 residues: Conglutin beta 3 (580 aa).

An N-terminal signal peptide occupies residues 1-30 (MAKMRVRFPTLVLLLGIVFLMAVSIGIAYG). Basic and acidic residues-rich tracts occupy residues 37–72 (NHERPQEREQEERDPRQQPRPHHQEEQEREHRRESE) and 79–92 (REQRREPRREREQE). Positions 37-165 (NHERPQEREQ…DSRRQRNPYY (129 aa)) are disordered. The span at 124 to 133 (QGSSSSSRRQ) shows a compositional bias: low complexity. Residues 134-145 (SGYERREQREER) are compositionally biased toward basic and acidic residues. 2 consecutive Cupin type-1 domains span residues 164–322 (YYFS…EEIQ) and 381–538 (FNLR…EDVE). Asn-229 and Asn-488 each carry an N-linked (GlcNAc...) asparagine glycan. The tract at residues 549 to 569 (FANAQPQQQQQREREGRHGRR) is disordered.

This sequence belongs to the 7S seed storage protein family. As to quaternary structure, component of globulins complexes which accumulate in seeds.

In terms of biological role, seed storage protein. Accumulates during seed development and is hydrolyzed after germination to provide a carbon and nitrogen source for the developing seedling. The polypeptide is Conglutin beta 3 (Lupinus angustifolius (Narrow-leaved blue lupine)).